The chain runs to 101 residues: Small ribosomal subunit protein uS14 (101 aa).

Residues 1 to 11 (MAKKSAIETNE) show a composition bias toward basic and acidic residues. Residues 1–24 (MAKKSAIETNERRRKLSQSKAAKR) form a disordered region. Residues 12–24 (RRRKLSQSKAAKR) show a composition bias toward basic residues.

Belongs to the universal ribosomal protein uS14 family. In terms of assembly, part of the 30S ribosomal subunit. Contacts proteins S3 and S10.

In terms of biological role, binds 16S rRNA, required for the assembly of 30S particles and may also be responsible for determining the conformation of the 16S rRNA at the A site. The polypeptide is Small ribosomal subunit protein uS14 (Azorhizobium caulinodans (strain ATCC 43989 / DSM 5975 / JCM 20966 / LMG 6465 / NBRC 14845 / NCIMB 13405 / ORS 571)).